Consider the following 183-residue polypeptide: Ribosome-recycling factor (183 aa).

It belongs to the RRF family.

The protein resides in the cytoplasm. In terms of biological role, responsible for the release of ribosomes from messenger RNA at the termination of protein biosynthesis. May increase the efficiency of translation by recycling ribosomes from one round of translation to another. The protein is Ribosome-recycling factor of Ureaplasma parvum serovar 3 (strain ATCC 27815 / 27 / NCTC 11736).